We begin with the raw amino-acid sequence, 250 residues long: Ubiquinone/menaquinone biosynthesis C-methyltransferase UbiE (250 aa).

S-adenosyl-L-methionine is bound by residues Thr73, Asp94, Asn122–Ser123, and Ser139.

This sequence belongs to the class I-like SAM-binding methyltransferase superfamily. MenG/UbiE family.

It catalyses the reaction a 2-demethylmenaquinol + S-adenosyl-L-methionine = a menaquinol + S-adenosyl-L-homocysteine + H(+). The enzyme catalyses a 2-methoxy-6-(all-trans-polyprenyl)benzene-1,4-diol + S-adenosyl-L-methionine = a 5-methoxy-2-methyl-3-(all-trans-polyprenyl)benzene-1,4-diol + S-adenosyl-L-homocysteine + H(+). Its pathway is quinol/quinone metabolism; menaquinone biosynthesis; menaquinol from 1,4-dihydroxy-2-naphthoate: step 2/2. It functions in the pathway cofactor biosynthesis; ubiquinone biosynthesis. Methyltransferase required for the conversion of demethylmenaquinol (DMKH2) to menaquinol (MKH2) and the conversion of 2-polyprenyl-6-methoxy-1,4-benzoquinol (DDMQH2) to 2-polyprenyl-3-methyl-6-methoxy-1,4-benzoquinol (DMQH2). This Wigglesworthia glossinidia brevipalpis protein is Ubiquinone/menaquinone biosynthesis C-methyltransferase UbiE.